Here is a 540-residue protein sequence, read N- to C-terminus: Chaperonin GroEL (540 aa).

ATP contacts are provided by residues 30 to 33, Lys-51, 87 to 91, Gly-415, 479 to 481, and Asp-495; these read TLGP, DGTTT, and NAA.

Belongs to the chaperonin (HSP60) family. In terms of assembly, forms a cylinder of 14 subunits composed of two heptameric rings stacked back-to-back. Interacts with the co-chaperonin GroES.

It localises to the cytoplasm. The catalysed reaction is ATP + H2O + a folded polypeptide = ADP + phosphate + an unfolded polypeptide.. Functionally, together with its co-chaperonin GroES, plays an essential role in assisting protein folding. The GroEL-GroES system forms a nano-cage that allows encapsulation of the non-native substrate proteins and provides a physical environment optimized to promote and accelerate protein folding. The sequence is that of Chaperonin GroEL from Pectobacterium carotovorum subsp. carotovorum (Erwinia carotovora subsp. carotovora).